The primary structure comprises 109 residues: Non-structural protein of 12.7 kDa (109 aa).

Belongs to the coronaviruses ns12.7 protein family.

This chain is Non-structural protein of 12.7 kDa, found in Sus scrofa (Pig).